The chain runs to 312 residues: Serine/threonine-protein phosphatase PP1 isozyme 2 (312 aa).

Alanine 2 is subject to N-acetylalanine. Mn(2+) is bound by residues aspartate 70, histidine 72, aspartate 98, and asparagine 130. Histidine 131 (proton donor) is an active-site residue. Positions 179 and 254 each coordinate Mn(2+).

Belongs to the PPP phosphatase family. PP-1 subfamily. As to quaternary structure, interacts with SRK2D/SNRK2.2 and SRK2E/SNRK2.6. Requires Mn(2+) as cofactor.

It localises to the nucleus. It is found in the cytoplasm. The catalysed reaction is O-phospho-L-seryl-[protein] + H2O = L-seryl-[protein] + phosphate. It catalyses the reaction O-phospho-L-threonyl-[protein] + H2O = L-threonyl-[protein] + phosphate. Its activity is regulated as follows. Phosphatase activity is strongly reduced by the protein phosphatase inhibitor 2 (I-2). In terms of biological role, serine/threonine-protein phosphatase that possesses phosphatase activity toward para-nitrophenyl phosphate (pNPP) in vitro. This chain is Serine/threonine-protein phosphatase PP1 isozyme 2, found in Arabidopsis thaliana (Mouse-ear cress).